Reading from the N-terminus, the 71-residue chain is Small ribosomal subunit protein bS21 (71 aa).

The span at 49 to 59 (KAAAVKRAAKK) shows a compositional bias: basic residues. The disordered stretch occupies residues 49-71 (KAAAVKRAAKKVSRENARRVRMY). Residues 60–71 (VSRENARRVRMY) are compositionally biased toward basic and acidic residues.

It belongs to the bacterial ribosomal protein bS21 family.

This Colwellia psychrerythraea (strain 34H / ATCC BAA-681) (Vibrio psychroerythus) protein is Small ribosomal subunit protein bS21.